Consider the following 171-residue polypeptide: NRR repressor homolog 2 (171 aa).

A compositionally biased stretch (basic and acidic residues) spans 1-12; sequence MEARLSTGEKTK. Disordered stretches follow at residues 1-45, 65-94, and 119-143; these read MEAR…QQQM, AALPSCREDDVSGGGGGEQRQKRPRAAPWR, and TTKGQDGNCKKGKRSEANAAAEEDK. Residues 26–43 show a composition bias toward acidic residues; it reads PEEETAAETTTSEEEEQQ.

The protein belongs to the NPR1-interactor family. As to quaternary structure, interacts with NPR1/NH1. Interacts with NPR3/NH3.

The protein localises to the nucleus. In terms of biological role, binds to and weakly represses NPR1/NH1-mediated transcriptional activation of LG2 in vitro. The polypeptide is NRR repressor homolog 2 (Oryza sativa subsp. japonica (Rice)).